The following is a 94-amino-acid chain: Cytochrome b-c1 complex subunit 8, mitochondrial (94 aa).

At 2-49 (GPPSGKTYMGWWGHMGGPKQKGITSYAVSPYAQKPLQGIFHNAVFNSF) the chain is on the mitochondrial matrix side. The helical transmembrane segment at 50 to 80 (RRFKSQFLYVLIPAGIYWYWWKNGNEYNEFL) threads the bilayer. The Mitochondrial intermembrane portion of the chain corresponds to 81–94 (YSKAGREELERVNV).

The protein belongs to the UQCRQ/QCR8 family. Component of the ubiquinol-cytochrome c oxidoreductase (cytochrome b-c1 complex, complex III, CIII), a multisubunit enzyme composed of 10 subunits. The complex is composed of 3 respiratory subunits cytochrome b (COB), cytochrome c1 (CYT1) and Rieske protein (RIP1), 2 core protein subunits COR1 and QCR2, and 5 low-molecular weight protein subunits QCR6, QCR7, QCR8, QCR9 and QCR10. The complex exists as an obligatory dimer and forms supercomplexes (SCs) in the inner mitochondrial membrane with a monomer or a dimer of cytochrome c oxidase (complex IV, CIV), resulting in 2 different assemblies (supercomplexes III(2)IV and III(2)IV(2)).

The protein localises to the mitochondrion inner membrane. Its function is as follows. Component of the ubiquinol-cytochrome c oxidoreductase, a multisubunit transmembrane complex that is part of the mitochondrial electron transport chain which drives oxidative phosphorylation. The respiratory chain contains 3 multisubunit complexes succinate dehydrogenase (complex II, CII), ubiquinol-cytochrome c oxidoreductase (cytochrome b-c1 complex, complex III, CIII) and cytochrome c oxidase (complex IV, CIV), that cooperate to transfer electrons derived from NADH and succinate to molecular oxygen, creating an electrochemical gradient over the inner membrane that drives transmembrane transport and the ATP synthase. The cytochrome b-c1 complex catalyzes electron transfer from ubiquinol to cytochrome c, linking this redox reaction to translocation of protons across the mitochondrial inner membrane, with protons being carried across the membrane as hydrogens on the quinol. In the process called Q cycle, 2 protons are consumed from the matrix, 4 protons are released into the intermembrane space and 2 electrons are passed to cytochrome c. The chain is Cytochrome b-c1 complex subunit 8, mitochondrial (QCR8) from Saccharomyces cerevisiae (strain ATCC 204508 / S288c) (Baker's yeast).